Here is a 305-residue protein sequence, read N- to C-terminus: tRNA uridine(34) hydroxylase (305 aa).

The Rhodanese domain maps to 136–230 (ADENTVVVDK…YLEEVPREQS (95 aa)). C190 (cysteine persulfide intermediate) is an active-site residue.

Belongs to the TrhO family.

The catalysed reaction is uridine(34) in tRNA + AH2 + O2 = 5-hydroxyuridine(34) in tRNA + A + H2O. Functionally, catalyzes oxygen-dependent 5-hydroxyuridine (ho5U) modification at position 34 in tRNAs. This Brucella melitensis biotype 1 (strain ATCC 23456 / CCUG 17765 / NCTC 10094 / 16M) protein is tRNA uridine(34) hydroxylase.